Reading from the N-terminus, the 357-residue chain is Transcription factor HHO1 (357 aa).

Disordered stretches follow at residues 94-117 (TSIEEEVDDKDDDDEEHQSHETDI) and 171-198 (NNNIKSPVTTSDGGSGGGGGRRGQRKNR). Acidic residues predominate over residues 96 to 109 (IEEEVDDKDDDDEE). Residues 171–182 (NNNIKSPVTTSD) show a composition bias toward polar residues. The 61-residue stretch at 193–253 (GQRKNRRCWS…HLQKYRLHAR (61 aa)) folds into the HTH myb-type domain. Positions 224–249 (PKQIRDIMKVDGLTNDEVKSHLQKYR) form a DNA-binding region, H-T-H motif.

The protein resides in the nucleus. Its function is as follows. Probable factor involved in nitrate and phosphate signaling in roots. Integrates nitrate and phosphate starvation responses and adaptation of root architecture, depending on nutrient availabilities. Acts downstream of the nitrate sensor and transporter NPF6.3/NRT1.1. Represses primary root development in response to phosphate deficiency conditions, only when nitrate is present. This Arabidopsis thaliana (Mouse-ear cress) protein is Transcription factor HHO1.